Here is a 530-residue protein sequence, read N- to C-terminus: 2,3-bisphosphoglycerate-independent phosphoglycerate mutase (530 aa).

Mn(2+) is bound by residues Asp-15 and Ser-65. Ser-65 acts as the Phosphoserine intermediate in catalysis. Residues His-126, 155–156 (RD), Arg-187, Arg-193, 257–260 (RPDR), and Lys-330 contribute to the substrate site. Asp-397, His-401, Asp-438, His-439, and His-456 together coordinate Mn(2+).

The protein belongs to the BPG-independent phosphoglycerate mutase family. Monomer. Mn(2+) is required as a cofactor.

The enzyme catalyses (2R)-2-phosphoglycerate = (2R)-3-phosphoglycerate. The protein operates within carbohydrate degradation; glycolysis; pyruvate from D-glyceraldehyde 3-phosphate: step 3/5. Its function is as follows. Catalyzes the interconversion of 2-phosphoglycerate and 3-phosphoglycerate. The sequence is that of 2,3-bisphosphoglycerate-independent phosphoglycerate mutase from Synechococcus sp. (strain JA-3-3Ab) (Cyanobacteria bacterium Yellowstone A-Prime).